Consider the following 381-residue polypeptide: ADP,ATP carrier protein 1, mitochondrial (381 aa).

A mitochondrion-targeting transit peptide spans 1–70 (MVDQVQHPTI…ATTASPVFVQ (70 aa)). Solcar repeat units follow at residues 78 to 171 (TNFA…FKRL), 183 to 276 (KWFA…VKPV), and 284 to 370 (DSFF…LQLI). 5 helical membrane-spanning segments follow: residues 80–107 (FALD…VKLL), 148–172 (TANV…KRLF), 181–201 (YWKW…SSLL), 252–273 (FNIS…YDSV), and 287–307 (FASF…SYPI). Residues Arg-153 and Lys-165 each coordinate ADP. Arg-311 is a binding site for ADP. The tract at residues 311-316 (RRRMMM) is important for transport activity. A Nucleotide carrier signature motif motif is present at residues 311–316 (RRRMMM). Residues 347 to 367 (AGANILRAVAGAGVLSGYDKL) form a helical membrane-spanning segment.

This sequence belongs to the mitochondrial carrier (TC 2.A.29) family. As to quaternary structure, monomer.

The protein localises to the mitochondrion inner membrane. The catalysed reaction is ADP(in) + ATP(out) = ADP(out) + ATP(in). The matrix-open state (m-state) is inhibited by the membrane-permeable bongkrekic acid (BKA). The cytoplasmic-open state (c-state) is inhibited by the membrane-impermeable toxic inhibitor carboxyatractyloside (CATR). ADP:ATP antiporter that mediates import of ADP into the mitochondrial matrix for ATP synthesis, and export of ATP out to fuel the cell. Cycles between the cytoplasmic-open state (c-state) and the matrix-open state (m-state): operates by the alternating access mechanism with a single substrate-binding site intermittently exposed to either the cytosolic (c-state) or matrix (m-state) side of the inner mitochondrial membrane. The chain is ADP,ATP carrier protein 1, mitochondrial (AAC1) from Arabidopsis thaliana (Mouse-ear cress).